A 405-amino-acid polypeptide reads, in one-letter code: S-adenosylmethionine synthase (405 aa).

139–144 (GQGSVD) contributes to the ATP binding site.

This sequence belongs to the AdoMet synthase 2 family. The cofactor is Mg(2+).

The enzyme catalyses L-methionine + ATP + H2O = S-adenosyl-L-methionine + phosphate + diphosphate. Its pathway is amino-acid biosynthesis; S-adenosyl-L-methionine biosynthesis; S-adenosyl-L-methionine from L-methionine: step 1/1. Its function is as follows. Catalyzes the formation of S-adenosylmethionine from methionine and ATP. In Thermococcus gammatolerans (strain DSM 15229 / JCM 11827 / EJ3), this protein is S-adenosylmethionine synthase.